The chain runs to 128 residues: uncharacterized protein (128 aa).

The protein belongs to the HesB/IscA family.

This is an uncharacterized protein from Buchnera aphidicola subsp. Baizongia pistaciae (strain Bp).